The chain runs to 764 residues: Complement factor B (764 aa).

Residues 1–25 form the signal peptide; sequence MGSNLSPQLCLMPFILGLLSGGVTT. Sushi domains follow at residues 35 to 100, 101 to 160, and 163 to 220; these read ESCS…ECRA, IHCP…ICDN, and GYCS…SCQD. Intrachain disulfides connect Cys37/Cys76, Cys62/Cys98, Cys103/Cys145, Cys131/Cys158, Cys165/Cys205, and Cys191/Cys218. Residues Asn122 and Asn142 are each glycosylated (N-linked (GlcNAc...) asparagine). One can recognise a VWFA domain in the interval 270 to 469; it reads NIYLVLDGSD…NLEDVFYQMI (200 aa). Positions 278 and 280 each coordinate Mg(2+). An N-linked (GlcNAc...) asparagine glycan is attached at Asn285. Thr353 lines the Mg(2+) pocket. N-linked (GlcNAc...) asparagine glycosylation is present at Asn378. The region spanning 477–757 is the Peptidase S1 domain; it reads LCGMVWEHRK…VLPWLKEKLQ (281 aa). 5 disulfides stabilise this stretch: Cys478–Cys596, Cys511–Cys527, Cys599–Cys615, Cys656–Cys682, and Cys695–Cys725. Active-site charge relay system residues include His526 and Asp576. Residue Ser699 is the Charge relay system of the active site.

This sequence belongs to the peptidase S1 family. As to quaternary structure, monomer. Interacts with complement C3b; this interaction is dependent on the presence of Mg(2+). In terms of assembly, catalytic component of the C3 convertase of the alternative complement pathway, also named C3bBb, composed of complement factor B Bb and complement C3b. Catalytic component of the C5 convertase of the alternative complement pathway, also named C3bBb3b, composed of complement factor B Bb and additional molecules of complement C3b. Interacts to CFP; this interaction contributes to the stabilization of the active C3-convertase enzyme complex. Mg(2+) is required as a cofactor. The cofactor is Mn(2+). Post-translationally, cleaved by CFD following activation of the alternative complement system, generating Ba and Bb chains. Cleavage and activation takes place when CFB is already associated with complement C3b.

It localises to the secreted. The protein resides in the cell surface. It catalyses the reaction Cleavage of Arg-|-Ser bond in complement component C3 alpha-chain to yield C3a and C3b, and Arg-|-Xaa bond in complement component C5 alpha-chain to yield C5a and C5b.. Functionally, precursor of the catalytic component of the C3 and C5 convertase complexes of the alternative pathway of the complement system, a cascade of proteins that leads to phagocytosis and breakdown of pathogens and signaling that strengthens the adaptive immune system. The alternative complement pathway acts as an amplification loop that enhances other complement pathways (classical, lectin and GZMK) by promoting formation of additional C3 and C5 convertases. CFB is cleaved and activated by CFD to generate Ba and Bb chains; Bb chain constituting the catalytic component of the C3 and C5 convertases. In terms of biological role, serine protease component of the complement C3 and C5 convertase complexes of the alternative complement pathway. Following cleavage and activation by factor D (CFD), forms the C3 convertase together with complement C3b. As part of the C3 convertase, cleaves and activates C3 into C3a anaphylatoxin and C3b opsonin, the next components of the complement pathways. When an additional complement C3b molecule binds to the C3 convertase, forms the C5 convertase, which cleaves and activates C5 into C5a anaphylatoxin and C5b component of the membrane attack complex. Involved in proliferation and differentiation of preactivated B-lymphocytes, rapid spreading of peripheral blood monocytes, stimulation of lymphocyte blastogenesis and lysis of erythrocytes. The chain is Complement factor B (CFB) from Pan troglodytes (Chimpanzee).